We begin with the raw amino-acid sequence, 376 residues long: Succinyl-diaminopimelate desuccinylase (376 aa).

Residue His-67 coordinates Zn(2+). Asp-69 is a catalytic residue. Asp-100 contributes to the Zn(2+) binding site. The active-site Proton acceptor is Glu-134. Zn(2+) contacts are provided by Glu-135, Glu-163, and His-349.

The protein belongs to the peptidase M20A family. DapE subfamily. Homodimer. Zn(2+) is required as a cofactor. Co(2+) serves as cofactor.

It carries out the reaction N-succinyl-(2S,6S)-2,6-diaminopimelate + H2O = (2S,6S)-2,6-diaminopimelate + succinate. Its pathway is amino-acid biosynthesis; L-lysine biosynthesis via DAP pathway; LL-2,6-diaminopimelate from (S)-tetrahydrodipicolinate (succinylase route): step 3/3. Functionally, catalyzes the hydrolysis of N-succinyl-L,L-diaminopimelic acid (SDAP), forming succinate and LL-2,6-diaminopimelate (DAP), an intermediate involved in the bacterial biosynthesis of lysine and meso-diaminopimelic acid, an essential component of bacterial cell walls. This is Succinyl-diaminopimelate desuccinylase from Haemophilus ducreyi (strain 35000HP / ATCC 700724).